The sequence spans 144 residues: D-aminoacyl-tRNA deacylase (144 aa).

Residues glycine 136 to proline 137 carry the Gly-cisPro motif, important for rejection of L-amino acids motif.

This sequence belongs to the DTD family. As to quaternary structure, homodimer.

Its subcellular location is the cytoplasm. The catalysed reaction is glycyl-tRNA(Ala) + H2O = tRNA(Ala) + glycine + H(+). The enzyme catalyses a D-aminoacyl-tRNA + H2O = a tRNA + a D-alpha-amino acid + H(+). An aminoacyl-tRNA editing enzyme that deacylates mischarged D-aminoacyl-tRNAs. Also deacylates mischarged glycyl-tRNA(Ala), protecting cells against glycine mischarging by AlaRS. Acts via tRNA-based rather than protein-based catalysis; rejects L-amino acids rather than detecting D-amino acids in the active site. By recycling D-aminoacyl-tRNA to D-amino acids and free tRNA molecules, this enzyme counteracts the toxicity associated with the formation of D-aminoacyl-tRNA entities in vivo and helps enforce protein L-homochirality. The polypeptide is D-aminoacyl-tRNA deacylase (Vibrio vulnificus (strain CMCP6)).